A 91-amino-acid chain; its full sequence is Small ribosomal subunit protein uS19 (91 aa).

The protein belongs to the universal ribosomal protein uS19 family.

Its function is as follows. Protein S19 forms a complex with S13 that binds strongly to the 16S ribosomal RNA. The chain is Small ribosomal subunit protein uS19 from Methylacidiphilum infernorum (isolate V4) (Methylokorus infernorum (strain V4)).